Reading from the N-terminus, the 408-residue chain is Chaperonin GroEL (408 aa).

ATP-binding positions include 30 to 33 (TLGP), K51, and 87 to 91 (DGTTT).

It belongs to the chaperonin (HSP60) family. In terms of assembly, forms a cylinder of 14 subunits composed of two heptameric rings stacked back-to-back. Interacts with the co-chaperonin GroES.

It localises to the cytoplasm. The enzyme catalyses ATP + H2O + a folded polypeptide = ADP + phosphate + an unfolded polypeptide.. Together with its co-chaperonin GroES, plays an essential role in assisting protein folding. The GroEL-GroES system forms a nano-cage that allows encapsulation of the non-native substrate proteins and provides a physical environment optimized to promote and accelerate protein folding. This chain is Chaperonin GroEL, found in Rickettsia rickettsii.